Reading from the N-terminus, the 230-residue chain is Demethylmenaquinone methyltransferase (230 aa).

S-adenosyl-L-methionine-binding positions include threonine 62, aspartate 80, 102–103, and serine 119; that span reads DG.

This sequence belongs to the class I-like SAM-binding methyltransferase superfamily. MenG/UbiE family.

The enzyme catalyses a 2-demethylmenaquinol + S-adenosyl-L-methionine = a menaquinol + S-adenosyl-L-homocysteine + H(+). It functions in the pathway quinol/quinone metabolism; menaquinone biosynthesis; menaquinol from 1,4-dihydroxy-2-naphthoate: step 2/2. Functionally, methyltransferase required for the conversion of demethylmenaquinol (DMKH2) to menaquinol (MKH2). The sequence is that of Demethylmenaquinone methyltransferase from Streptomyces griseus subsp. griseus (strain JCM 4626 / CBS 651.72 / NBRC 13350 / KCC S-0626 / ISP 5235).